A 229-amino-acid chain; its full sequence is Thymidylate kinase (229 aa).

Residue 9–16 (GPEGSGKS) coordinates ATP.

The protein belongs to the thymidylate kinase family.

The catalysed reaction is dTMP + ATP = dTDP + ADP. Functionally, phosphorylation of dTMP to form dTDP in both de novo and salvage pathways of dTTP synthesis. The protein is Thymidylate kinase of Roseiflexus castenholzii (strain DSM 13941 / HLO8).